The sequence spans 144 residues: Elicitor-responsive protein 3 (144 aa).

Positions 1 to 103 (MVQGTLEVLL…YTEGSIPPTV (103 aa)) constitute a C2 domain. Ca(2+) contacts are provided by aspartate 20, aspartate 26, aspartate 73, aspartate 75, and aspartate 81. Positions 123-144 (TPEDDRDRGLSEEDIGGWKQSS) are disordered.

Ca(2+) serves as cofactor.

This chain is Elicitor-responsive protein 3 (ERG3), found in Oryza sativa subsp. indica (Rice).